Reading from the N-terminus, the 1246-residue chain is Putative helicase L115 (1246 aa).

The tract at residues 1 to 21 (MSKTITKKVNKKTKKSTKINP) is disordered. Residues 872–1030 (AKFTDGYHGF…YYMLKMLQTG (159 aa)) enclose the Helicase ATP-binding domain. 885-892 (SDVGSGKT) lines the ATP pocket.

The sequence is that of Putative helicase L115 from Acanthamoeba polyphaga (Amoeba).